An 843-amino-acid polypeptide reads, in one-letter code: Protein P (843 aa).

A terminal protein domain (TP) region spans residues 1 to 177 (MPLSYQHFRK…FCGSPYSWEQ (177 aa)). The spacer stretch occupies residues 178–346 (DLQHGRLVFQ…YCLSHIVNLI (169 aa)). Residues 219–269 (RKSRLGPQPAQGQLAGRQQGGSGSIRARVHPSPWGTVGVEPSGSGPTHNCA) form a disordered region. A compositionally biased stretch (low complexity) spans 223-235 (LGPQPAQGQLAGR). Residues 347–690 (EDWGPCTEHG…YLNLYPVARQ (344 aa)) form a polymerase/reverse transcriptase domain (RT) region. In terms of domain architecture, Reverse transcriptase spans 357 to 600 (EHRIRTPRTP…YSLNFMGYVI (244 aa)). Residues D429, D551, and D552 each contribute to the Mg(2+) site.

Belongs to the hepadnaviridae P protein family.

The enzyme catalyses DNA(n) + a 2'-deoxyribonucleoside 5'-triphosphate = DNA(n+1) + diphosphate. It carries out the reaction Endonucleolytic cleavage to 5'-phosphomonoester.. Activated by host HSP70 and HSP40 in vitro to be able to bind the epsilon loop of the pgRNA. Because deletion of the RNase H region renders the protein partly chaperone-independent, the chaperones may be needed indirectly to relieve occlusion of the RNA-binding site by this domain. Inhibited by several reverse-transcriptase inhibitors: Lamivudine, Adefovir and Entecavir. Multifunctional enzyme that converts the viral RNA genome into dsDNA in viral cytoplasmic capsids. This enzyme displays a DNA polymerase activity that can copy either DNA or RNA templates, and a ribonuclease H (RNase H) activity that cleaves the RNA strand of RNA-DNA heteroduplexes in a partially processive 3'- to 5'-endonucleasic mode. Neo-synthesized pregenomic RNA (pgRNA) are encapsidated together with the P protein, and reverse-transcribed inside the nucleocapsid. Initiation of reverse-transcription occurs first by binding the epsilon loop on the pgRNA genome, and is initiated by protein priming, thereby the 5'-end of (-)DNA is covalently linked to P protein. Partial (+)DNA is synthesized from the (-)DNA template and generates the relaxed circular DNA (RC-DNA) genome. After budding and infection, the RC-DNA migrates in the nucleus, and is converted into a plasmid-like covalently closed circular DNA (cccDNA). The activity of P protein does not seem to be necessary for cccDNA generation, and is presumably released from (+)DNA by host nuclear DNA repair machinery. The polypeptide is Protein P (Hepatitis B virus genotype B2 subtype adw (isolate China/patient4/1996) (HBV-B)).